A 411-amino-acid chain; its full sequence is Methylthioribose-1-phosphate isomerase (411 aa).

The Proton donor role is filled by Asp-284.

This sequence belongs to the eIF-2B alpha/beta/delta subunits family. MtnA subfamily.

Its subcellular location is the cytoplasm. It localises to the nucleus. The enzyme catalyses 5-(methylsulfanyl)-alpha-D-ribose 1-phosphate = 5-(methylsulfanyl)-D-ribulose 1-phosphate. The protein operates within amino-acid biosynthesis; L-methionine biosynthesis via salvage pathway; L-methionine from S-methyl-5-thio-alpha-D-ribose 1-phosphate: step 1/6. Its function is as follows. Catalyzes the interconversion of methylthioribose-1-phosphate (MTR-1-P) into methylthioribulose-1-phosphate (MTRu-1-P). The protein is Methylthioribose-1-phosphate isomerase of Komagataella phaffii (strain GS115 / ATCC 20864) (Yeast).